Here is a 345-residue protein sequence, read N- to C-terminus: Arginine-hydroxylase NDUFAF5, mitochondrial (345 aa).

A mitochondrion-targeting transit peptide spans M1–R36.

Belongs to the methyltransferase superfamily. Interacts with NDUFAF8, leading to stabilize NDUFAF5. Interacts with NDUFS7. Interacts with PYURF (via TRM112 domain); the interaction is direct and stabilizes NDUFAF5 protein.

The protein resides in the mitochondrion inner membrane. Its function is as follows. Arginine hydroxylase that mediates hydroxylation of 'Arg-111' of NDUFS7 and is involved in the assembly of mitochondrial NADH:ubiquinone oxidoreductase complex (complex I, MT-ND1) at early stages. May also have methyltransferase activity. This is Arginine-hydroxylase NDUFAF5, mitochondrial from Homo sapiens (Human).